The primary structure comprises 214 residues: Outer-membrane lipoprotein LolB (214 aa).

The signal sequence occupies residues 1–25 (MNNLKRFTKSIFSCIALSGLLFLGG). C26 carries the N-palmitoyl cysteine lipid modification. A lipid anchor (S-diacylglycerol cysteine) is attached at C26.

The protein belongs to the LolB family. In terms of assembly, monomer.

Its subcellular location is the cell outer membrane. In terms of biological role, plays a critical role in the incorporation of lipoproteins in the outer membrane after they are released by the LolA protein. This Shewanella sp. (strain MR-4) protein is Outer-membrane lipoprotein LolB.